A 95-amino-acid chain; its full sequence is Large ribosomal subunit protein bL25 (95 aa).

The protein belongs to the bacterial ribosomal protein bL25 family. Part of the 50S ribosomal subunit; part of the 5S rRNA/L5/L18/L25 subcomplex. Contacts the 5S rRNA. Binds to the 5S rRNA independently of L5 and L18.

In terms of biological role, this is one of the proteins that binds to the 5S RNA in the ribosome where it forms part of the central protuberance. This Shewanella piezotolerans (strain WP3 / JCM 13877) protein is Large ribosomal subunit protein bL25.